Reading from the N-terminus, the 435-residue chain is Histidine--tRNA ligase (435 aa).

The protein belongs to the class-II aminoacyl-tRNA synthetase family. As to quaternary structure, homodimer.

The protein localises to the cytoplasm. The enzyme catalyses tRNA(His) + L-histidine + ATP = L-histidyl-tRNA(His) + AMP + diphosphate + H(+). The protein is Histidine--tRNA ligase of Synechococcus elongatus (strain ATCC 33912 / PCC 7942 / FACHB-805) (Anacystis nidulans R2).